The following is a 303-amino-acid chain: Probable 5-dehydro-4-deoxyglucarate dehydratase (303 aa).

This sequence belongs to the DapA family.

The catalysed reaction is 5-dehydro-4-deoxy-D-glucarate + H(+) = 2,5-dioxopentanoate + CO2 + H2O. The protein operates within carbohydrate acid metabolism; D-glucarate degradation; 2,5-dioxopentanoate from D-glucarate: step 2/2. The sequence is that of Probable 5-dehydro-4-deoxyglucarate dehydratase from Agrobacterium fabrum (strain C58 / ATCC 33970) (Agrobacterium tumefaciens (strain C58)).